A 114-amino-acid polypeptide reads, in one-letter code: Small ribosomal subunit protein bS6 (114 aa).

Belongs to the bacterial ribosomal protein bS6 family.

Binds together with bS18 to 16S ribosomal RNA. The chain is Small ribosomal subunit protein bS6 from Thermosynechococcus vestitus (strain NIES-2133 / IAM M-273 / BP-1).